The primary structure comprises 184 residues: ATP synthase subunit delta (184 aa).

It belongs to the ATPase delta chain family. F-type ATPases have 2 components, F(1) - the catalytic core - and F(0) - the membrane proton channel. F(1) has five subunits: alpha(3), beta(3), gamma(1), delta(1), epsilon(1). F(0) has three main subunits: a(1), b(2) and c(10-14). The alpha and beta chains form an alternating ring which encloses part of the gamma chain. F(1) is attached to F(0) by a central stalk formed by the gamma and epsilon chains, while a peripheral stalk is formed by the delta and b chains.

The protein resides in the cell membrane. F(1)F(0) ATP synthase produces ATP from ADP in the presence of a proton or sodium gradient. F-type ATPases consist of two structural domains, F(1) containing the extramembraneous catalytic core and F(0) containing the membrane proton channel, linked together by a central stalk and a peripheral stalk. During catalysis, ATP synthesis in the catalytic domain of F(1) is coupled via a rotary mechanism of the central stalk subunits to proton translocation. Functionally, this protein is part of the stalk that links CF(0) to CF(1). It either transmits conformational changes from CF(0) to CF(1) or is implicated in proton conduction. This is ATP synthase subunit delta from Bacillus licheniformis (strain ATCC 14580 / DSM 13 / JCM 2505 / CCUG 7422 / NBRC 12200 / NCIMB 9375 / NCTC 10341 / NRRL NRS-1264 / Gibson 46).